The chain runs to 172 residues: Large ribosomal subunit protein uL10 (172 aa).

Belongs to the universal ribosomal protein uL10 family. In terms of assembly, part of the ribosomal stalk of the 50S ribosomal subunit. The N-terminus interacts with L11 and the large rRNA to form the base of the stalk. The C-terminus forms an elongated spine to which L12 dimers bind in a sequential fashion forming a multimeric L10(L12)X complex.

Functionally, forms part of the ribosomal stalk, playing a central role in the interaction of the ribosome with GTP-bound translation factors. The polypeptide is Large ribosomal subunit protein uL10 (rplJ) (Chlamydia trachomatis serovar D (strain ATCC VR-885 / DSM 19411 / UW-3/Cx)).